Here is a 517-residue protein sequence, read N- to C-terminus: Peptide chain release factor 3 (517 aa).

A tr-type G domain is found at 9-269 (AKRRTFAIIS…DFVEHAPAPR (261 aa)). GTP is bound by residues 18-25 (SHPDAGKT), 86-90 (DTPGH), and 140-143 (NKLD).

Belongs to the TRAFAC class translation factor GTPase superfamily. Classic translation factor GTPase family. PrfC subfamily.

It is found in the cytoplasm. Increases the formation of ribosomal termination complexes and stimulates activities of RF-1 and RF-2. It binds guanine nucleotides and has strong preference for UGA stop codons. It may interact directly with the ribosome. The stimulation of RF-1 and RF-2 is significantly reduced by GTP and GDP, but not by GMP. The chain is Peptide chain release factor 3 from Halorhodospira halophila (strain DSM 244 / SL1) (Ectothiorhodospira halophila (strain DSM 244 / SL1)).